The primary structure comprises 118 residues: Small ribosomal subunit protein uS13 (118 aa).

Residues 93–118 form a disordered region; that stretch reads RGLPVRGQRTKTNARTRKGPRKPIRK.

Belongs to the universal ribosomal protein uS13 family. As to quaternary structure, part of the 30S ribosomal subunit. Forms a loose heterodimer with protein S19. Forms two bridges to the 50S subunit in the 70S ribosome.

In terms of biological role, located at the top of the head of the 30S subunit, it contacts several helices of the 16S rRNA. In the 70S ribosome it contacts the 23S rRNA (bridge B1a) and protein L5 of the 50S subunit (bridge B1b), connecting the 2 subunits; these bridges are implicated in subunit movement. Contacts the tRNAs in the A and P-sites. The chain is Small ribosomal subunit protein uS13 from Azotobacter vinelandii (strain DJ / ATCC BAA-1303).